A 327-amino-acid chain; its full sequence is Undecaprenyl-phosphate 4-deoxy-4-formamido-L-arabinose transferase (327 aa).

The next 2 helical transmembrane spans lie at 236–256 (LSLV…LLVV) and 270–290 (VFTL…GMGL).

This sequence belongs to the glycosyltransferase 2 family.

The protein resides in the cell inner membrane. The enzyme catalyses UDP-4-deoxy-4-formamido-beta-L-arabinose + di-trans,octa-cis-undecaprenyl phosphate = 4-deoxy-4-formamido-alpha-L-arabinopyranosyl di-trans,octa-cis-undecaprenyl phosphate + UDP. It participates in glycolipid biosynthesis; 4-amino-4-deoxy-alpha-L-arabinose undecaprenyl phosphate biosynthesis; 4-amino-4-deoxy-alpha-L-arabinose undecaprenyl phosphate from UDP-4-deoxy-4-formamido-beta-L-arabinose and undecaprenyl phosphate: step 1/2. Its pathway is bacterial outer membrane biogenesis; lipopolysaccharide biosynthesis. Functionally, catalyzes the transfer of 4-deoxy-4-formamido-L-arabinose from UDP to undecaprenyl phosphate. The modified arabinose is attached to lipid A and is required for resistance to polymyxin and cationic antimicrobial peptides. The sequence is that of Undecaprenyl-phosphate 4-deoxy-4-formamido-L-arabinose transferase from Yersinia enterocolitica serotype O:8 / biotype 1B (strain NCTC 13174 / 8081).